The following is a 338-amino-acid chain: uncharacterized protein (338 aa).

This is an uncharacterized protein from Thermoproteus tenax (TTV1).